The sequence spans 105 residues: Ferredoxin-2 (105 aa).

A 2Fe-2S ferredoxin-type domain is found at 4–94 (YQVEVIYQGQ…DLKIETHKED (91 aa)). Positions 40, 45, 48, and 78 each coordinate [2Fe-2S] cluster.

Belongs to the 2Fe2S plant-type ferredoxin family. As to quaternary structure, forms a complex with heterodimeric ferredoxin-thioredoxin reductase (FTR) and thioredoxin. It depends on [2Fe-2S] cluster as a cofactor.

Ferredoxins are iron-sulfur proteins that transfer electrons in a wide variety of metabolic reactions. The chain is Ferredoxin-2 (petF2) from Synechococcus sp. (strain ATCC 27144 / PCC 6301 / SAUG 1402/1) (Anacystis nidulans).